The primary structure comprises 217 residues: Large ribosomal subunit protein uL3 (217 aa).

Q154 is subject to N5-methylglutamine.

This sequence belongs to the universal ribosomal protein uL3 family. As to quaternary structure, part of the 50S ribosomal subunit. Forms a cluster with proteins L14 and L19. Methylated by PrmB.

Its function is as follows. One of the primary rRNA binding proteins, it binds directly near the 3'-end of the 23S rRNA, where it nucleates assembly of the 50S subunit. The protein is Large ribosomal subunit protein uL3 of Burkholderia ambifaria (strain ATCC BAA-244 / DSM 16087 / CCUG 44356 / LMG 19182 / AMMD) (Burkholderia cepacia (strain AMMD)).